Consider the following 657-residue polypeptide: Cyclic-di-AMP phosphodiesterase PdeA (657 aa).

2 consecutive transmembrane segments (helical) span residues 13–35 (PLYG…SWWL) and 37–53 (ALVV…MFYF). A PAS-like region spans residues 74 to 137 (RSEEEALVEM…ITGNDEKGIM (64 aa)). Residues 175–303 (NKSVFAVIFL…GGDQVVIKQP (129 aa)) enclose the GGDEF domain. Residues 342-498 (VFVMGHRYPD…IEATALLSGI (157 aa)) are DHH. Mn(2+) contacts are provided by H347, D351, D353, D422, H446, and D501. Residues 592 to 645 (VITLRPDKLIGISARSLGQINVQVIMEKLGGGGHLSNAATQLKDVTIAEAEKQL) are DHHA1.

It belongs to the GdpP/PdeA phosphodiesterase family. It depends on heme b as a cofactor. Mn(2+) serves as cofactor.

It is found in the cell membrane. The enzyme catalyses 3',3'-c-di-AMP + H2O = 5'-O-phosphonoadenylyl-(3'-&gt;5')-adenosine + H(+). Functionally, has phosphodiesterase (PDE) activity against cyclic-di-AMP (c-di-AMP). Overexpression decreases export of c-di-AMP, leads to slightly increased susceptibility to the antibiotic cefuroxime and somewhat slower growth in macrophages. There are at least 2 PDEs for c-di-AMP in this bacteria (this one and pgpH); this may be the major PDE for intracellular growth in host macrophages. During host infection c-di-AMP is secreted into the host cytoplasm which leads to interferon-beta production and secretion by the host. c-di-AMP is a second messenger that mediates growth, cell wall stability and virulence. May monitor cellular heme or NO levels. The chain is Cyclic-di-AMP phosphodiesterase PdeA from Listeria monocytogenes serotype 1/2a (strain 10403S).